An 84-amino-acid polypeptide reads, in one-letter code: Double gene block protein 2 (84 aa).

Over 1 to 4 (MPSA) the chain is Lumenal. The helical transmembrane segment at 5 to 25 (NLHPIVLTGVIGLMLLIRLRC) threads the bilayer. Over 26–30 (TFTST) the chain is Cytoplasmic. A helical transmembrane segment spans residues 31 to 51 (FSLPPLVTLNQIIALSFCGLL). At 52–84 (LNSISRAERACYYNYSVDSSKQQHISISTPNGK) the chain is on the lumenal side.

It belongs to the carmovirus double gene block protein 2 family.

Its subcellular location is the host endoplasmic reticulum membrane. Its function is as follows. Cell-to-cell movement function. This is Double gene block protein 2 from Carnation mottle virus (isolate China/Shanghai) (CarMV).